We begin with the raw amino-acid sequence, 253 residues long: tRNA (guanine-N(7)-)-methyltransferase (253 aa).

Residues 1–12 are compositionally biased toward pro residues; the sequence is MSQTPMPQPDQA. Residues 1–39 are disordered; it reads MSQTPMPQPDQAPPVDVGQPVDEAEAKRRRFKTHGRKKG. Residues 27–39 are compositionally biased toward basic residues; that stretch reads KRRRFKTHGRKKG. Residues E84, D109, N136, and D159 each coordinate S-adenosyl-L-methionine. D159 is a catalytic residue. Substrate-binding positions include K163, D195, and 232–235; that span reads TNFE.

Belongs to the class I-like SAM-binding methyltransferase superfamily. TrmB family.

The catalysed reaction is guanosine(46) in tRNA + S-adenosyl-L-methionine = N(7)-methylguanosine(46) in tRNA + S-adenosyl-L-homocysteine. It participates in tRNA modification; N(7)-methylguanine-tRNA biosynthesis. In terms of biological role, catalyzes the formation of N(7)-methylguanine at position 46 (m7G46) in tRNA. In Magnetococcus marinus (strain ATCC BAA-1437 / JCM 17883 / MC-1), this protein is tRNA (guanine-N(7)-)-methyltransferase.